Reading from the N-terminus, the 394-residue chain is Probable aspartate/prephenate aminotransferase (394 aa).

The L-aspartate site is built by glycine 40, tryptophan 126, and asparagine 176. Lysine 239 is subject to N6-(pyridoxal phosphate)lysine. L-aspartate is bound at residue arginine 370.

It belongs to the class-I pyridoxal-phosphate-dependent aminotransferase family. As to quaternary structure, homodimer. Pyridoxal 5'-phosphate is required as a cofactor.

The protein localises to the cytoplasm. It catalyses the reaction L-aspartate + 2-oxoglutarate = oxaloacetate + L-glutamate. The enzyme catalyses L-arogenate + oxaloacetate = prephenate + L-aspartate. Catalyzes the reversible conversion of aspartate and 2-oxoglutarate to glutamate and oxaloacetate. Can also transaminate prephenate in the presence of aspartate. In Aquifex aeolicus (strain VF5), this protein is Probable aspartate/prephenate aminotransferase (aspC).